Here is a 451-residue protein sequence, read N- to C-terminus: AP-3 complex subunit mu (451 aa).

An MHD domain is found at 191 to 450 (NNEIYVDLVE…TSRAGDYIVR (260 aa)).

This sequence belongs to the adaptor complexes medium subunit family. Adaptor protein complex 3 (AP-3) is a heterotetramer composed of 2 large adaptins (APL5 and APL6), a medium adaptin (APM3) and a small adaptin (APS3).

The protein localises to the golgi apparatus. Its subcellular location is the cytoplasmic vesicle membrane. In terms of biological role, part of the AP-3 complex, an adaptor-related complex which is not clathrin-associated. The complex is associated with the Golgi region as well as more peripheral structures. It facilitates the budding of vesicles from the Golgi membrane and may be directly involved in trafficking to the vacuole. This is AP-3 complex subunit mu (APM3) from Eremothecium gossypii (strain ATCC 10895 / CBS 109.51 / FGSC 9923 / NRRL Y-1056) (Yeast).